We begin with the raw amino-acid sequence, 753 residues long: Serine/threonine-protein phosphatase with EF-hands 2 (753 aa).

The region spanning 21–46 (KAAALIQRWYRRYVARLEMRRRCTWS) is the IQ domain. The interval 128 to 540 (ATALVEAFRL…PHIVQYQANK (413 aa)) is catalytic. Residues aspartate 179, histidine 181, aspartate 208, and asparagine 240 each contribute to the Mn(2+) site. The Proton donor role is filled by histidine 241. Histidine 292 contributes to the Mn(2+) binding site. 2 disordered regions span residues 318 to 382 (CKTR…GSLD) and 409 to 435 (VTGEKEEPSRSASEADSEAGELRKPTQ). The span at 322–333 (QKSEKQMEEKRR) shows a compositional bias: basic and acidic residues. A compositionally biased stretch (low complexity) spans 348–361 (LPESRSLPSSPLRL). A compositionally biased stretch (polar residues) spans 366–377 (AQKTSRSSSIPC). Histidine 488 contributes to the Mn(2+) binding site. 3 EF-hand domains span residues 568-603 (AHSSDLLSEFKKHDADKVGLITLSDWAAAVESVLHL), 652-687 (RNRSNLETIFRIIDSDHSGFISLDEFRQTWKLFSSH), and 692-727 (ITDDCICDLARSIDFNKDGHIDINEFLEAFRLVEKS). Aspartate 665, aspartate 667, serine 669, glutamate 676, aspartate 705, asparagine 707, aspartate 709, histidine 711, and glutamate 716 together coordinate Ca(2+). Positions 732-753 (DASECPQATNAKDSGCSSPGAH) are disordered. Over residues 737–753 (PQATNAKDSGCSSPGAH) the composition is skewed to polar residues.

This sequence belongs to the PPP phosphatase family. Mn(2+) serves as cofactor. As to expression, retinal specific.

The protein resides in the cytoplasm. Its subcellular location is the cell projection. The protein localises to the cilium. It is found in the photoreceptor outer segment. It localises to the photoreceptor inner segment. The catalysed reaction is O-phospho-L-seryl-[protein] + H2O = L-seryl-[protein] + phosphate. It catalyses the reaction O-phospho-L-threonyl-[protein] + H2O = L-threonyl-[protein] + phosphate. Activated by calcium. In terms of biological role, may play a role in phototransduction. May dephosphorylate photoactivated rhodopsin. May function as a calcium sensing regulator of ionic currents, energy production or synaptic transmission. The polypeptide is Serine/threonine-protein phosphatase with EF-hands 2 (PPEF2) (Homo sapiens (Human)).